The following is a 710-amino-acid chain: Elongation factor G (710 aa).

The tr-type G domain occupies 8-297 (ERVRNIGIAA…AVVDYLPSPI (290 aa)). Residues 17-24 (AHIDAGKT), 96-100 (DTPGH), and 150-153 (NKMD) contribute to the GTP site.

It belongs to the TRAFAC class translation factor GTPase superfamily. Classic translation factor GTPase family. EF-G/EF-2 subfamily.

Its subcellular location is the cytoplasm. Catalyzes the GTP-dependent ribosomal translocation step during translation elongation. During this step, the ribosome changes from the pre-translocational (PRE) to the post-translocational (POST) state as the newly formed A-site-bound peptidyl-tRNA and P-site-bound deacylated tRNA move to the P and E sites, respectively. Catalyzes the coordinated movement of the two tRNA molecules, the mRNA and conformational changes in the ribosome. This chain is Elongation factor G, found in Synechococcus sp. (strain JA-3-3Ab) (Cyanobacteria bacterium Yellowstone A-Prime).